The chain runs to 632 residues: Tetratricopeptide repeat protein 39B (632 aa).

TPR repeat units lie at residues 343–376 (SLVL…QEEW), 535–568 (CLVK…EKLL), and 576–609 (PFTL…YKDY).

This sequence belongs to the TTC39 family.

Functionally, regulates high density lipoprotein (HDL) cholesterol metabolism by promoting the ubiquitination and degradation of the oxysterols receptors LXR (NR1H2 and NR1H3). This is Tetratricopeptide repeat protein 39B (TTC39B) from Macaca fascicularis (Crab-eating macaque).